The following is a 585-amino-acid chain: Aspartate--tRNA ligase (585 aa).

Glu169 provides a ligand contact to L-aspartate. The segment at 193–196 (QLFK) is aspartate. Arg215 provides a ligand contact to L-aspartate. Residues 215 to 217 (RDE) and Gln224 each bind ATP. His443 is a binding site for L-aspartate. Glu478 contacts ATP. Arg485 contacts L-aspartate. An ATP-binding site is contributed by 530–533 (GLDR).

Belongs to the class-II aminoacyl-tRNA synthetase family. Type 1 subfamily. Homodimer.

Its subcellular location is the cytoplasm. The catalysed reaction is tRNA(Asp) + L-aspartate + ATP = L-aspartyl-tRNA(Asp) + AMP + diphosphate. Catalyzes the attachment of L-aspartate to tRNA(Asp) in a two-step reaction: L-aspartate is first activated by ATP to form Asp-AMP and then transferred to the acceptor end of tRNA(Asp). The protein is Aspartate--tRNA ligase of Pseudothermotoga lettingae (strain ATCC BAA-301 / DSM 14385 / NBRC 107922 / TMO) (Thermotoga lettingae).